Reading from the N-terminus, the 327-residue chain is Aspartate--ammonia ligase (327 aa).

This sequence belongs to the class-II aminoacyl-tRNA synthetase family. AsnA subfamily.

Its subcellular location is the cytoplasm. The catalysed reaction is L-aspartate + NH4(+) + ATP = L-asparagine + AMP + diphosphate + H(+). The protein operates within amino-acid biosynthesis; L-asparagine biosynthesis; L-asparagine from L-aspartate (ammonia route): step 1/1. The chain is Aspartate--ammonia ligase from Bacillus cereus (strain AH820).